Consider the following 414-residue polypeptide: Transforming growth factor beta-2 proprotein (414 aa).

An N-terminal signal peptide occupies residues 1 to 20; the sequence is MHYCVLSAFLLLHLVTVALS. Asparagine 72, asparagine 140, and asparagine 241 each carry an N-linked (GlcNAc...) asparagine glycan. Cystine bridges form between cysteine 309–cysteine 318, cysteine 317–cysteine 380, cysteine 346–cysteine 411, and cysteine 350–cysteine 413.

This sequence belongs to the TGF-beta family. In terms of assembly, interacts with the serine proteases, HTRA1 and HTRA3. Interacts with ASPN. Interacts with MFAP5. Interacts with Transforming growth factor beta-2 (TGF-beta-2) chain; interaction is non-covalent and maintains (TGF-beta-2) in a latent state. Interacts with LRRC32/GARP; leading to regulate activation of TGF-beta-2. Interacts with NREP; the interaction results in a decrease in TGFB2 autoinduction. As to quaternary structure, transforming growth factor beta-2: Homodimer; disulfide-linked. Transforming growth factor beta-2: Interacts with TGF-beta receptors (TGFBR1 and TGFBR2), leading to signal transduction. In terms of processing, the precursor proprotein is cleaved in the Golgi apparatus to form Transforming growth factor beta-2 (TGF-beta-2) and Latency-associated peptide (LAP) chains, which remain non-covalently linked, rendering TGF-beta-2 inactive.

The protein resides in the secreted. Its subcellular location is the extracellular space. The protein localises to the extracellular matrix. In terms of biological role, precursor of the Latency-associated peptide (LAP) and Transforming growth factor beta-2 (TGF-beta-2) chains, which constitute the regulatory and active subunit of TGF-beta-2, respectively. Functionally, required to maintain the Transforming growth factor beta-2 (TGF-beta-2) chain in a latent state during storage in extracellular matrix. Associates non-covalently with TGF-beta-2 and regulates its activation via interaction with 'milieu molecules', such as LTBP1 and LRRC32/GARP, that control activation of TGF-beta-2. Its function is as follows. Multifunctional protein that regulates various processes such as angiogenesis and heart development. Activation into mature form follows different steps: following cleavage of the proprotein in the Golgi apparatus, Latency-associated peptide (LAP) and Transforming growth factor beta-2 (TGF-beta-2) chains remain non-covalently linked rendering TGF-beta-2 inactive during storage in extracellular matrix. At the same time, LAP chain interacts with 'milieu molecules', such as LTBP1 and LRRC32/GARP, that control activation of TGF-beta-2 and maintain it in a latent state during storage in extracellular milieus. Once activated following release of LAP, TGF-beta-2 acts by binding to TGF-beta receptors (TGFBR1 and TGFBR2), which transduce signal. The protein is Transforming growth factor beta-2 proprotein (TGFB2) of Bos taurus (Bovine).